A 186-amino-acid chain; its full sequence is Ribosome-recycling factor (186 aa).

Belongs to the RRF family.

The protein resides in the cytoplasm. Responsible for the release of ribosomes from messenger RNA at the termination of protein biosynthesis. May increase the efficiency of translation by recycling ribosomes from one round of translation to another. In Amoebophilus asiaticus (strain 5a2), this protein is Ribosome-recycling factor.